We begin with the raw amino-acid sequence, 302 residues long: Sulfate adenylyltransferase subunit 2 (302 aa).

It belongs to the PAPS reductase family. CysD subfamily. Heterodimer composed of CysD, the smaller subunit, and CysN.

The enzyme catalyses sulfate + ATP + H(+) = adenosine 5'-phosphosulfate + diphosphate. The protein operates within sulfur metabolism; hydrogen sulfide biosynthesis; sulfite from sulfate: step 1/3. In terms of biological role, with CysN forms the ATP sulfurylase (ATPS) that catalyzes the adenylation of sulfate producing adenosine 5'-phosphosulfate (APS) and diphosphate, the first enzymatic step in sulfur assimilation pathway. APS synthesis involves the formation of a high-energy phosphoric-sulfuric acid anhydride bond driven by GTP hydrolysis by CysN coupled to ATP hydrolysis by CysD. This Xanthomonas oryzae pv. oryzae (strain MAFF 311018) protein is Sulfate adenylyltransferase subunit 2.